Consider the following 68-residue polypeptide: Potassium channel toxin epsilon-KTx 1.2 (68 aa).

Positions 1–26 are cleaved as a signal peptide; sequence MKFSCGFLLIFLVLSAMIATFSEVEA. Intrachain disulfides connect Cys30-Cys38, Cys33-Cys54, Cys37-Cys47, and Cys42-Cys52. At Tyr55 the chain carries Tyrosine amide. Positions 57 to 68 are excised as a propeptide; the sequence is RSDLNEEFENYQ.

This sequence belongs to the short scorpion toxin superfamily. Potassium channel inhibitor family. Epsilon-KTx 01 subfamily. In terms of tissue distribution, expressed by the venom gland.

The protein localises to the secreted. In terms of biological role, potassium channel blocker. At 3 uM, this toxin blocks voltage-gated potassium channels rKv1.2/KCNA2 (5%), hKv1.3/KCNA3 (10%),rKv1.4/KCNA4 (20%), Kv11/hERG (24%), and Shaker-IR (27%). This chain is Potassium channel toxin epsilon-KTx 1.2, found in Tityus serrulatus (Brazilian scorpion).